A 194-amino-acid chain; its full sequence is NADH-quinone oxidoreductase subunit B (194 aa).

The [4Fe-4S] cluster site is built by Cys-73, Cys-74, Cys-138, and Cys-168.

It belongs to the complex I 20 kDa subunit family. In terms of assembly, NDH-1 is composed of 14 different subunits. Subunits NuoB, C, D, E, F, and G constitute the peripheral sector of the complex. [4Fe-4S] cluster is required as a cofactor.

The protein resides in the cell inner membrane. The catalysed reaction is a quinone + NADH + 5 H(+)(in) = a quinol + NAD(+) + 4 H(+)(out). NDH-1 shuttles electrons from NADH, via FMN and iron-sulfur (Fe-S) centers, to quinones in the respiratory chain. The immediate electron acceptor for the enzyme in this species is believed to be ubiquinone. Couples the redox reaction to proton translocation (for every two electrons transferred, four hydrogen ions are translocated across the cytoplasmic membrane), and thus conserves the redox energy in a proton gradient. The polypeptide is NADH-quinone oxidoreductase subunit B (Rhizobium johnstonii (strain DSM 114642 / LMG 32736 / 3841) (Rhizobium leguminosarum bv. viciae)).